A 169-amino-acid polypeptide reads, in one-letter code: Mediator of RNA polymerase II transcription subunit 28 (169 aa).

The interval 1–35 (MFSAQQPGPPPPNQPGAPAGLMSTPPGAKNPSSTL) is disordered. Residues 99-137 (EQVIKEDVSELRNELQRKEALIQKHLTKLRSWQQVLEEI) are a coiled coil.

Belongs to the Mediator complex subunit 28 family. As to quaternary structure, component of the Mediator complex.

It localises to the nucleus. In terms of biological role, component of the Mediator complex, a coactivator involved in the regulated transcription of nearly all RNA polymerase II-dependent genes. Mediator functions as a bridge to convey information from gene-specific regulatory proteins to the basal RNA polymerase II transcription machinery. Mediator is recruited to promoters by direct interactions with regulatory proteins and serves as a scaffold for the assembly of a functional preinitiation complex with RNA polymerase II and the general transcription factors. This chain is Mediator of RNA polymerase II transcription subunit 28 (med28), found in Xenopus tropicalis (Western clawed frog).